The sequence spans 190 residues: MKCIVGLGNIGKRFEQTRHNIGFEVIDFMLEQNRFSLDKQKFKGAYTIERLAGEKVMFIEPMTMMNLSGEAVAPLMKYYDIDIEDLIVLYDDLDLPQGEIRLRQKGSAGGHNGMKSIIQMLGTDQFKRIRIGVDRPSNGMAIVDYVLQKFSNQEMETMNKVIEHSARAIEAYIESNRFDRVMNEYNGEIK.

Phe14 is a tRNA binding site. His19 serves as the catalytic Proton acceptor. TRNA contacts are provided by Met64, Asn66, and Asn112.

It belongs to the PTH family. In terms of assembly, monomer.

It is found in the cytoplasm. The catalysed reaction is an N-acyl-L-alpha-aminoacyl-tRNA + H2O = an N-acyl-L-amino acid + a tRNA + H(+). In terms of biological role, hydrolyzes ribosome-free peptidyl-tRNAs (with 1 or more amino acids incorporated), which drop off the ribosome during protein synthesis, or as a result of ribosome stalling. Its function is as follows. Catalyzes the release of premature peptidyl moieties from peptidyl-tRNA molecules trapped in stalled 50S ribosomal subunits, and thus maintains levels of free tRNAs and 50S ribosomes. This is Peptidyl-tRNA hydrolase from Staphylococcus saprophyticus subsp. saprophyticus (strain ATCC 15305 / DSM 20229 / NCIMB 8711 / NCTC 7292 / S-41).